Here is a 480-residue protein sequence, read N- to C-terminus: UDP-N-acetylmuramate--L-alanine ligase (480 aa).

115–121 (GTHGKTT) provides a ligand contact to ATP.

This sequence belongs to the MurCDEF family.

The protein resides in the cytoplasm. It carries out the reaction UDP-N-acetyl-alpha-D-muramate + L-alanine + ATP = UDP-N-acetyl-alpha-D-muramoyl-L-alanine + ADP + phosphate + H(+). It participates in cell wall biogenesis; peptidoglycan biosynthesis. Its function is as follows. Cell wall formation. The sequence is that of UDP-N-acetylmuramate--L-alanine ligase from Gluconacetobacter diazotrophicus (strain ATCC 49037 / DSM 5601 / CCUG 37298 / CIP 103539 / LMG 7603 / PAl5).